A 403-amino-acid chain; its full sequence is Argininosuccinate synthase (403 aa).

ATP contacts are provided by residues A10–S18 and A38. Position 89 (Y89) interacts with L-citrulline. An ATP-binding site is contributed by G119. 3 residues coordinate L-aspartate: T121, N125, and D126. N125 is an L-citrulline binding site. L-citrulline is bound by residues R129, S177, S186, E262, and Y274.

It belongs to the argininosuccinate synthase family. Type 1 subfamily. Homotetramer.

The protein localises to the cytoplasm. The catalysed reaction is L-citrulline + L-aspartate + ATP = 2-(N(omega)-L-arginino)succinate + AMP + diphosphate + H(+). It participates in amino-acid biosynthesis; L-arginine biosynthesis; L-arginine from L-ornithine and carbamoyl phosphate: step 2/3. The polypeptide is Argininosuccinate synthase (Synechococcus sp. (strain CC9605)).